Reading from the N-terminus, the 121-residue chain is uncharacterized protein (121 aa).

The N-terminal stretch at 1–19 (MKKFALATIFALATTSAFA) is a signal peptide.

It to E.coli YgiW.

It localises to the periplasm. This is an uncharacterized protein from Haemophilus influenzae (strain ATCC 51907 / DSM 11121 / KW20 / Rd).